The following is a 71-amino-acid chain: Omega-conotoxin SO-3 (71 aa).

The first 22 residues, 1–22 (MKLTCMVIVAVLLLTACQLITA), serve as a signal peptide directing secretion. Positions 23-45 (DDSRGTQKHRTLRSKTKLSMSTR) are excised as a propeptide. Cystine bridges form between C46/C61, C53/C65, and C60/C70. C70 bears the Cysteine amide mark.

The protein belongs to the conotoxin O1 superfamily. As to expression, expressed by the venom duct.

The protein localises to the secreted. In terms of biological role, omega-conotoxins act at presynaptic membranes, they bind and block voltage-gated calcium channels (Cav). This peptide selectively targets Cav2.2/CACNA1B (IC(50)=160 nM) voltage-gated calcium channels. When tested in mammals, this toxin displays an analgesic potency similar to MVIIA in a range of acute and chronic pain models in rodents, but has less adverse effects (tremor, diminution of spontaneous locomotor activity and bad coordinated locomotion) compared with identical dosages of MVIIA injected intrathecally. In Conus striatus (Striated cone), this protein is Omega-conotoxin SO-3.